The primary structure comprises 168 residues: MKMVKSIAAGLTAAAAIGAAAAGVTSIMAGGPVVYQMQPVVFGAPLPLDPASAPDVPTAAQLTSLLNSLADPNVSFANKGSLVEGGIGGTEARIADHKLKKAAEHGDLPLSFSVTNIQPAAAGSATADVSVSGPKLSSPVTRNVTFVNQGGWMLSRASAMELLQAAGN.

A signal peptide spans 1–22; sequence MKMVKSIAAGLTAAAAIGAAAA. The propeptide occupies 23–48; the sequence is GVTSIMAGGPVVYQMQPVVFGAPLPL.

The protein belongs to the MTB12 family.

It localises to the secreted. Its function is as follows. May play a role in the development of protective immune responses. The polypeptide is Low molecular weight antigen MTB12 (mtb12) (Mycobacterium tuberculosis (strain CDC 1551 / Oshkosh)).